The following is a 465-amino-acid chain: MAP kinase-interacting serine/threonine-protein kinase 2 (465 aa).

Positions 23 to 72 are disordered; sequence ELAFSLDQPDHGDSDFGLQCSARPDMPASQPIDIPDAKKRGKKKKRGRAT. Positions 60–66 match the Nuclear localization signal motif; it reads KKRGKKK. Serine 74 is subject to Phosphoserine. The Protein kinase domain occupies 84 to 388; it reads QLQEDVLGEG…TPMVLQRNSC (305 aa). ATP is bound by residues 90–98 and lysine 113; that span reads LGEGAHARV. 160-162 lines the staurosporine pocket; that stretch reads EKM. Aspartate 205 serves as the catalytic Proton acceptor. A staurosporine-binding site is contributed by glutamate 209. Residues threonine 244 and threonine 249 each carry the phosphothreonine modification. Residues cysteine 299, cysteine 311, and cysteine 314 each contribute to the Zn(2+) site. Threonine 379 carries the phosphothreonine modification. A phosphoserine mark is found at serine 437 and serine 440. Positions 444 to 448 match the MAP kinase binding motif; the sequence is LAQRR. Serine 452 is subject to Phosphoserine.

It belongs to the protein kinase superfamily. CAMK Ser/Thr protein kinase family. As to quaternary structure, monomer. Interacts with the C-terminal regions of EIF4G1 and EIF4G2; this interaction is promoted when MAPK pathways are repressed but repressed upon ERK proteins activation. Also binds to dephosphorylated MAPK3/ERK1 and MAPK1/ERK2. Isoform 1 interaction with phosphorylated MAPK3/ERK1 and MAPK1/ERK2 protects it from dephosphorylation and inactivation. Isoform 2 interacts with ESR2 and EIF4E in the nucleus. Mg(2+) is required as a cofactor. It depends on Zn(2+) as a cofactor. Post-translationally, dual phosphorylation of Thr-244 and Thr-249 activates the kinase. Phosphorylation of Thr-379 activates the kinase. Phosphorylated upon arsenic trioxide As(2)O(3) treatment. Phosphorylated by MAPK1/ERK2, MAPK11 and MAPK14. Dephosphorylated by PP2A. As to expression, ubiquitously expressed in all tissues examined. Isoform 2 is expressed at higher levels in the ovary than is isoform 1.

It localises to the nucleus. Its subcellular location is the PML body. It is found in the cytoplasm. It carries out the reaction L-seryl-[protein] + ATP = O-phospho-L-seryl-[protein] + ADP + H(+). The catalysed reaction is L-threonyl-[protein] + ATP = O-phospho-L-threonyl-[protein] + ADP + H(+). Its activity is regulated as follows. Inhibited by CGP57380 and staurosporine. Activated by phosphorylation in a negative-feedback regulatory manner in response to chemotherapy (e.g. cytarabine) and thus impairs the generation of antileukemic responses. Serine/threonine-protein kinase that phosphorylates SFPQ/PSF, HNRNPA1 and EIF4E. May play a role in the response to environmental stress and cytokines. Appears to regulate translation by phosphorylating EIF4E, thus increasing the affinity of this protein for the 7-methylguanosine-containing mRNA cap. Required for mediating PP2A-inhibition-induced EIF4E phosphorylation. Triggers EIF4E shuttling from cytoplasm to nucleus. Isoform 1 displays a high basal kinase activity, but isoform 2 exhibits a very low kinase activity. Acts as a mediator of the suppressive effects of IFNgamma on hematopoiesis. Negative regulator for signals that control generation of arsenic trioxide As(2)O(3)-dependent apoptosis and anti-leukemic responses. Involved in anti-apoptotic signaling in response to serum withdrawal. The protein is MAP kinase-interacting serine/threonine-protein kinase 2 (MKNK2) of Homo sapiens (Human).